Consider the following 406-residue polypeptide: Autotransporter heptosyltransferase TibC (406 aa).

Positions 107, 108, and 109 each coordinate ADP-D-glycero-beta-D-manno-heptose. The active-site Proton acceptor is the Asp110. ADP-D-glycero-beta-D-manno-heptose-binding residues include Gln224, Thr226, Lys230, Arg257, Leu281, Gly302, and Glu326. Fe(3+)-binding residues include Cys339, Cys342, Cys358, and Cys370.

The protein belongs to the glycosyltransferase 9 family. As to quaternary structure, homododecamer composed of 6 homodimers forming a ring. The cofactor is Fe(3+).

It carries out the reaction ADP-D-glycero-beta-D-manno-heptose + L-seryl-[protein] = O-(D-glycero-alpha-D-manno-heptosyl)-L-seryl-[protein] + ADP + H(+). Functionally, glycosylates adhesin TibA. Specifically adds anomer D-glycero-beta-D-manno-heptose. Cannot use ADP-L-glycero-beta-D-manno-heptose as a sugar donor. The polypeptide is Autotransporter heptosyltransferase TibC (Escherichia coli O78:H11 (strain H10407 / ETEC)).